Here is a 316-residue protein sequence, read N- to C-terminus: Mycothiol acetyltransferase (316 aa).

N-acetyltransferase domains are found at residues 16-153 (REVR…VPAV) and 156-316 (VRIR…PAAN). Glu36 provides a ligand contact to 1D-myo-inositol 2-(L-cysteinylamino)-2-deoxy-alpha-D-glucopyranoside. Acetyl-CoA-binding positions include 83–85 (LVV) and 91–96 (RRGIGS). Glu183, Lys228, and Glu238 together coordinate 1D-myo-inositol 2-(L-cysteinylamino)-2-deoxy-alpha-D-glucopyranoside. Acetyl-CoA is bound by residues 242 to 244 (VGV) and 249 to 255 (QGRGLGQ). Tyr283 lines the 1D-myo-inositol 2-(L-cysteinylamino)-2-deoxy-alpha-D-glucopyranoside pocket. 288-293 (NVAAVR) is an acetyl-CoA binding site.

It belongs to the acetyltransferase family. MshD subfamily. In terms of assembly, monomer.

It carries out the reaction 1D-myo-inositol 2-(L-cysteinylamino)-2-deoxy-alpha-D-glucopyranoside + acetyl-CoA = mycothiol + CoA + H(+). Its function is as follows. Catalyzes the transfer of acetyl from acetyl-CoA to desacetylmycothiol (Cys-GlcN-Ins) to form mycothiol. The chain is Mycothiol acetyltransferase from Mycolicibacterium paratuberculosis (strain ATCC BAA-968 / K-10) (Mycobacterium paratuberculosis).